We begin with the raw amino-acid sequence, 312 residues long: DNA-directed RNA polymerase subunit alpha (312 aa).

The alpha N-terminal domain (alpha-NTD) stretch occupies residues 1–226 (MIEFEKPKIT…DHLNLFVDLS (226 aa)). The segment at 243 to 312 (TERVLDKIIE…ELGLSLKKRK (70 aa)) is alpha C-terminal domain (alpha-CTD).

The protein belongs to the RNA polymerase alpha chain family. As to quaternary structure, homodimer. The RNAP catalytic core consists of 2 alpha, 1 beta, 1 beta' and 1 omega subunit. When a sigma factor is associated with the core the holoenzyme is formed, which can initiate transcription.

The enzyme catalyses RNA(n) + a ribonucleoside 5'-triphosphate = RNA(n+1) + diphosphate. Functionally, DNA-dependent RNA polymerase catalyzes the transcription of DNA into RNA using the four ribonucleoside triphosphates as substrates. The protein is DNA-directed RNA polymerase subunit alpha of Lactococcus lactis subsp. cremoris (strain SK11).